The following is a 431-amino-acid chain: Tyrosine--tRNA ligase (431 aa).

Y34 contacts L-tyrosine. Positions 39–48 match the 'HIGH' region motif; sequence PTADSLHIGH. L-tyrosine-binding residues include Y171 and Q175. Residues 231–235 carry the 'KMSKS' region motif; sequence KFGKT. An ATP-binding site is contributed by K234. The 70-residue stretch at 353-422 folds into the S4 RNA-binding domain; the sequence is INAVEALVKT…GKYTILRRGK (70 aa).

It belongs to the class-I aminoacyl-tRNA synthetase family. TyrS type 1 subfamily. As to quaternary structure, homodimer.

Its subcellular location is the cytoplasm. It carries out the reaction tRNA(Tyr) + L-tyrosine + ATP = L-tyrosyl-tRNA(Tyr) + AMP + diphosphate + H(+). Catalyzes the attachment of tyrosine to tRNA(Tyr) in a two-step reaction: tyrosine is first activated by ATP to form Tyr-AMP and then transferred to the acceptor end of tRNA(Tyr). This is Tyrosine--tRNA ligase from Neisseria gonorrhoeae (strain ATCC 700825 / FA 1090).